Reading from the N-terminus, the 195-residue chain is UPF0167 protein CbrC (195 aa).

The protein belongs to the UPF0167 family.

In Escherichia coli (strain K12), this protein is UPF0167 protein CbrC (cbrC).